Consider the following 458-residue polypeptide: Glutamyl-tRNA reductase (458 aa).

Substrate-binding positions include 49–52 (TCNR), Ser111, 116–118 (ETE), and Gln122. Catalysis depends on Cys50, which acts as the Nucleophile. 191 to 196 (GAGKMS) contacts NADP(+). 2 stretches are compositionally biased toward basic and acidic residues: residues 426–440 (IPKDGEEHSSSKEVE) and 448–458 (ERGHHESDFHN). The segment at 426–458 (IPKDGEEHSSSKEVESVTQSSTERGHHESDFHN) is disordered.

It belongs to the glutamyl-tRNA reductase family. Homodimer.

The catalysed reaction is (S)-4-amino-5-oxopentanoate + tRNA(Glu) + NADP(+) = L-glutamyl-tRNA(Glu) + NADPH + H(+). The protein operates within porphyrin-containing compound metabolism; protoporphyrin-IX biosynthesis; 5-aminolevulinate from L-glutamyl-tRNA(Glu): step 1/2. In terms of biological role, catalyzes the NADPH-dependent reduction of glutamyl-tRNA(Glu) to glutamate 1-semialdehyde (GSA). This chain is Glutamyl-tRNA reductase, found in Natranaerobius thermophilus (strain ATCC BAA-1301 / DSM 18059 / JW/NM-WN-LF).